Reading from the N-terminus, the 333-residue chain is MNQWMELAERVLDGGEVTEKEALSILECPDDDVLLLMHAAFQIRKRYYGKKVKLNMIMNAKSGLCPENCGYCSQSSISKAPIDSYRMVDKTTLLEGAKRAHDLNIGTYCIVASGRGPSNREVDQVVDAVKEIKETYGLKICACLGLLKPGQAERLKEAGVDRYNHNINTSKTNHSNITTSHTYDDRVNTVETAKKSGMSPCSGVIVGMKETKQDVVDMAKSLKALDADSIPVNFLHAIDGTPLEGVNELNPLYCLKVLALFRFINPTKEIRISGGREVNLRSLQPLGLYAANSIFVGDYLTTAGQNETEDHKMLHDLGFEVESVEEMKASLQR.

In terms of domain architecture, Radical SAM core spans 47–276; sequence YYGKKVKLNM…TKEIRISGGR (230 aa). [4Fe-4S] cluster contacts are provided by Cys-65, Cys-69, and Cys-72. 4 residues coordinate [2Fe-2S] cluster: Cys-109, Cys-141, Cys-201, and Arg-271.

The protein belongs to the radical SAM superfamily. Biotin synthase family. As to quaternary structure, homodimer. Requires [4Fe-4S] cluster as cofactor. [2Fe-2S] cluster is required as a cofactor.

The catalysed reaction is (4R,5S)-dethiobiotin + (sulfur carrier)-SH + 2 reduced [2Fe-2S]-[ferredoxin] + 2 S-adenosyl-L-methionine = (sulfur carrier)-H + biotin + 2 5'-deoxyadenosine + 2 L-methionine + 2 oxidized [2Fe-2S]-[ferredoxin]. It functions in the pathway cofactor biosynthesis; biotin biosynthesis; biotin from 7,8-diaminononanoate: step 2/2. Its function is as follows. Catalyzes the conversion of dethiobiotin (DTB) to biotin by the insertion of a sulfur atom into dethiobiotin via a radical-based mechanism. This Bacillus licheniformis (strain ATCC 14580 / DSM 13 / JCM 2505 / CCUG 7422 / NBRC 12200 / NCIMB 9375 / NCTC 10341 / NRRL NRS-1264 / Gibson 46) protein is Biotin synthase.